A 271-amino-acid chain; its full sequence is uncharacterized protein (271 aa).

This is an uncharacterized protein from Human cytomegalovirus (strain Merlin) (HHV-5).